Here is a 311-residue protein sequence, read N- to C-terminus: D-alanine--D-alanine ligase (311 aa).

One can recognise an ATP-grasp domain in the interval 105–306 (KQLYIHAGLP…FSALLDRLIE (202 aa)). Residue 133–188 (ADRLGLPVVVKPEHEGSSIGLSIVRNRDQLAAAVETGWQYDRRCLIEKYVHGIEIT) participates in ATP binding. Mg(2+) contacts are provided by Asp261, Glu273, and Asn275.

This sequence belongs to the D-alanine--D-alanine ligase family. Mg(2+) is required as a cofactor. Mn(2+) serves as cofactor.

The protein localises to the cytoplasm. It carries out the reaction 2 D-alanine + ATP = D-alanyl-D-alanine + ADP + phosphate + H(+). Its pathway is cell wall biogenesis; peptidoglycan biosynthesis. Its function is as follows. Cell wall formation. The sequence is that of D-alanine--D-alanine ligase from Syntrophobacter fumaroxidans (strain DSM 10017 / MPOB).